Here is a 142-residue protein sequence, read N- to C-terminus: Large ribosomal subunit protein uL13 (142 aa).

The protein belongs to the universal ribosomal protein uL13 family. As to quaternary structure, part of the 50S ribosomal subunit.

Functionally, this protein is one of the early assembly proteins of the 50S ribosomal subunit, although it is not seen to bind rRNA by itself. It is important during the early stages of 50S assembly. The sequence is that of Large ribosomal subunit protein uL13 from Proteus mirabilis (strain HI4320).